Reading from the N-terminus, the 859-residue chain is Photoactivated adenylate cyclase subunit beta-like protein FB (859 aa).

In terms of domain architecture, BLUF 1 spans 56 to 149 (LRRLMYLSKS…GRMYGDWHMK (94 aa)). Residues 205-333 (VVTFIYLVEF…DCINTTSRIA (129 aa)) enclose the Guanylate cyclase 1 domain. The disordered stretch occupies residues 414–449 (GLPNSQRPPIFDDTPKANRRPRTPGYGGRQRSDSQV). Positions 471–563 (LTTLTYISQA…RVYPSEWTLT (93 aa)) constitute a BLUF 2 domain. The Guanylate cyclase 2 domain occupies 619–748 (VMLATDICSF…AVSARVMEVE (130 aa)). The disordered stretch occupies residues 813 to 859 (AARSGEKPLTEPEAAKPDFRVSPGRVRHGDSGRRSNSAQGKRSIQVR). Basic and acidic residues predominate over residues 815–831 (RSGEKPLTEPEAAKPDF). The segment covering 846–859 (RSNSAQGKRSIQVR) has biased composition (polar residues).

The protein belongs to the adenylyl cyclase class-4/guanylyl cyclase family. As to quaternary structure, heterotetramer of two alpha and two beta subunits.

The protein localises to the cell projection. The protein resides in the cilium. It localises to the flagellum. The polypeptide is Photoactivated adenylate cyclase subunit beta-like protein FB (Euglena gracilis).